Reading from the N-terminus, the 557-residue chain is Glutathione hydrolase proenzyme (557 aa).

Positions 1–24 are cleaved as a signal peptide; that stretch reads MQPVLFRTLSLGVAIAAASSSAFA. Arginine 94 contributes to the L-glutamate binding site. Threonine 364 serves as the catalytic Nucleophile. L-glutamate-binding positions include threonine 382, asparagine 384, glutamate 403, aspartate 406, 435-436, and 456-457; these read SS and GG.

The protein belongs to the gamma-glutamyltransferase family. As to quaternary structure, this enzyme consists of two polypeptide chains, which are synthesized in precursor form from a single polypeptide. Post-translationally, cleaved by autocatalysis into a large and a small subunit.

Its subcellular location is the periplasm. It carries out the reaction an N-terminal (5-L-glutamyl)-[peptide] + an alpha-amino acid = 5-L-glutamyl amino acid + an N-terminal L-alpha-aminoacyl-[peptide]. The catalysed reaction is glutathione + H2O = L-cysteinylglycine + L-glutamate. It catalyses the reaction an S-substituted glutathione + H2O = an S-substituted L-cysteinylglycine + L-glutamate. The protein operates within sulfur metabolism; glutathione metabolism. The chain is Glutathione hydrolase proenzyme (ggt) from Pseudomonas aeruginosa (strain ATCC 15692 / DSM 22644 / CIP 104116 / JCM 14847 / LMG 12228 / 1C / PRS 101 / PAO1).